A 175-amino-acid chain; its full sequence is Regenerating islet-derived protein 3-beta (175 aa).

The N-terminal stretch at 1–26 is a signal peptide; the sequence is MLPPTACSVMSWMLLSCLMLLSQVQG. Residues 27-37 constitute a propeptide that is removed on maturation; sequence EDSLKNIPSAR. Cystine bridges form between Cys40–Cys51, Cys68–Cys171, and Cys146–Cys163. Residues 47–172 enclose the C-type lectin domain; sequence YGSYCYALFQ…CEVKLPYVCK (126 aa). His107 provides a ligand contact to Zn(2+). The short motif at 114 to 116 is the EPN element; the sequence is EPN. Residue Glu121 coordinates Zn(2+).

Forms a hexameric membrane-permeabilizing oligomeric pore on membrane phospholipids. The hexamer is formed by three dimers related by helical symmetry. Forms filaments, filamentation traps pore complexes and limits damage to host cells. Interacts with EXTL3. In terms of processing, proteolytic processing by trypsin removes an inhibitory N-terminal propeptide and is essential for peptidoglycan binding and antibacterial activity. As to expression, constitutively expressed in the small intestine, moderately in colon and at an extremely low level in healthy pancreas.

The protein resides in the secreted. Lipopolysaccharide inhibits pore-forming activity, explaining why is bactericidal for Gram-positive but not Gram-negative bacteria. Bactericidal C-type lectin which acts against several intestinal Gram-positive and Gram-negative bacteria. Lacks antibacterial activity against S.typhimurium. May play a role in protection against infection with S.enteritidis by inhibiting its translocation from the gut lumen into intestinal tissues and further extraintestinal tissues. Its function is as follows. Acts as a hormone in response to different stimuli. Secreted by different cell types to activate its receptor EXTL3 and induce cell specific signaling pathways. In pancreas, is able stimulate cell proliferation. This Mus musculus (Mouse) protein is Regenerating islet-derived protein 3-beta.